Reading from the N-terminus, the 181-residue chain is Adenylate kinase (181 aa).

10–15 (GAGKGT) provides a ligand contact to ATP. The interval 30-59 (STGDLFRYNISNGTELGLEAKKYLDAGDLV) is NMP. Residues T31, R36, 57 to 59 (DLV), 85 to 88 (GYPR), and Q92 each bind AMP. Positions 126–132 (GRGRDDD) are LID. Residue R127 coordinates ATP. The AMP site is built by R129 and R140. G166 contacts ATP.

Belongs to the adenylate kinase family. Monomer.

It is found in the cytoplasm. The enzyme catalyses AMP + ATP = 2 ADP. It participates in purine metabolism; AMP biosynthesis via salvage pathway; AMP from ADP: step 1/1. In terms of biological role, catalyzes the reversible transfer of the terminal phosphate group between ATP and AMP. Plays an important role in cellular energy homeostasis and in adenine nucleotide metabolism. This is Adenylate kinase from Mycolicibacterium vanbaalenii (strain DSM 7251 / JCM 13017 / BCRC 16820 / KCTC 9966 / NRRL B-24157 / PYR-1) (Mycobacterium vanbaalenii).